The following is a 745-amino-acid chain: Phosphoribosylformylglycinamidine synthase subunit PurL (745 aa).

Residue His-50 is part of the active site. The ATP site is built by Tyr-53 and Lys-92. Residue Glu-94 participates in Mg(2+) binding. Residues Ser-95 to His-98 and Arg-117 each bind substrate. The active-site Proton acceptor is the His-96. Asp-118 serves as a coordination point for Mg(2+). Gln-241 serves as a coordination point for substrate. Asp-269 is a Mg(2+) binding site. Position 313–315 (Glu-313–Gln-315) interacts with substrate. 2 residues coordinate ATP: Asp-495 and Gly-532. Asn-533 serves as a coordination point for Mg(2+). A substrate-binding site is contributed by Ser-535.

The protein belongs to the FGAMS family. As to quaternary structure, monomer. Part of the FGAM synthase complex composed of 1 PurL, 1 PurQ and 2 PurS subunits.

The protein localises to the cytoplasm. The catalysed reaction is N(2)-formyl-N(1)-(5-phospho-beta-D-ribosyl)glycinamide + L-glutamine + ATP + H2O = 2-formamido-N(1)-(5-O-phospho-beta-D-ribosyl)acetamidine + L-glutamate + ADP + phosphate + H(+). It participates in purine metabolism; IMP biosynthesis via de novo pathway; 5-amino-1-(5-phospho-D-ribosyl)imidazole from N(2)-formyl-N(1)-(5-phospho-D-ribosyl)glycinamide: step 1/2. Its function is as follows. Part of the phosphoribosylformylglycinamidine synthase complex involved in the purines biosynthetic pathway. Catalyzes the ATP-dependent conversion of formylglycinamide ribonucleotide (FGAR) and glutamine to yield formylglycinamidine ribonucleotide (FGAM) and glutamate. The FGAM synthase complex is composed of three subunits. PurQ produces an ammonia molecule by converting glutamine to glutamate. PurL transfers the ammonia molecule to FGAR to form FGAM in an ATP-dependent manner. PurS interacts with PurQ and PurL and is thought to assist in the transfer of the ammonia molecule from PurQ to PurL. This chain is Phosphoribosylformylglycinamidine synthase subunit PurL, found in Allorhizobium ampelinum (strain ATCC BAA-846 / DSM 112012 / S4) (Agrobacterium vitis (strain S4)).